The primary structure comprises 345 residues: Anthranilate phosphoribosyltransferase (345 aa).

5-phospho-alpha-D-ribose 1-diphosphate-binding positions include glycine 84, 87–88 (GD), threonine 92, 94–97 (NIST), 112–120 (KHGNRSVSS), and serine 124. Residue glycine 84 coordinates anthranilate. Serine 96 lines the Mg(2+) pocket. Residue asparagine 115 coordinates anthranilate. Residue arginine 170 coordinates anthranilate. 2 residues coordinate Mg(2+): aspartate 229 and glutamate 230.

This sequence belongs to the anthranilate phosphoribosyltransferase family. As to quaternary structure, homodimer. The cofactor is Mg(2+).

The enzyme catalyses N-(5-phospho-beta-D-ribosyl)anthranilate + diphosphate = 5-phospho-alpha-D-ribose 1-diphosphate + anthranilate. It participates in amino-acid biosynthesis; L-tryptophan biosynthesis; L-tryptophan from chorismate: step 2/5. In terms of biological role, catalyzes the transfer of the phosphoribosyl group of 5-phosphorylribose-1-pyrophosphate (PRPP) to anthranilate to yield N-(5'-phosphoribosyl)-anthranilate (PRA). This is Anthranilate phosphoribosyltransferase from Xanthomonas campestris pv. campestris (strain 8004).